A 191-amino-acid chain; its full sequence is Ribosomal RNA small subunit methyltransferase G (191 aa).

S-adenosyl-L-methionine contacts are provided by residues Gly62, Phe67, 111 to 112 (IE), and Arg124.

Belongs to the methyltransferase superfamily. RNA methyltransferase RsmG family.

It localises to the cytoplasm. The catalysed reaction is guanosine(527) in 16S rRNA + S-adenosyl-L-methionine = N(7)-methylguanosine(527) in 16S rRNA + S-adenosyl-L-homocysteine. Specifically methylates the N7 position of guanine in position 527 of 16S rRNA. This chain is Ribosomal RNA small subunit methyltransferase G, found in Rickettsia typhi (strain ATCC VR-144 / Wilmington).